The following is a 287-amino-acid chain: Elongation factor Ts (287 aa).

The tract at residues 80–83 (TDFL) is involved in Mg(2+) ion dislocation from EF-Tu.

It belongs to the EF-Ts family.

Its subcellular location is the cytoplasm. Functionally, associates with the EF-Tu.GDP complex and induces the exchange of GDP to GTP. It remains bound to the aminoacyl-tRNA.EF-Tu.GTP complex up to the GTP hydrolysis stage on the ribosome. The protein is Elongation factor Ts of Pseudomonas putida (strain W619).